The primary structure comprises 121 residues: Small ribosomal subunit protein uS13 (121 aa).

The disordered stretch occupies residues 93–121 (RGLPMRGQRTRTNARTRKGPRKGAAALKK).

This sequence belongs to the universal ribosomal protein uS13 family. In terms of assembly, part of the 30S ribosomal subunit. Forms a loose heterodimer with protein S19. Forms two bridges to the 50S subunit in the 70S ribosome.

Functionally, located at the top of the head of the 30S subunit, it contacts several helices of the 16S rRNA. In the 70S ribosome it contacts the 23S rRNA (bridge B1a) and protein L5 of the 50S subunit (bridge B1b), connecting the 2 subunits; these bridges are implicated in subunit movement. Contacts the tRNAs in the A and P-sites. The sequence is that of Small ribosomal subunit protein uS13 from Acidovorax ebreus (strain TPSY) (Diaphorobacter sp. (strain TPSY)).